The chain runs to 214 residues: 3-isopropylmalate dehydratase small subunit (214 aa).

Belongs to the LeuD family. LeuD type 1 subfamily. Heterodimer of LeuC and LeuD.

It carries out the reaction (2R,3S)-3-isopropylmalate = (2S)-2-isopropylmalate. It functions in the pathway amino-acid biosynthesis; L-leucine biosynthesis; L-leucine from 3-methyl-2-oxobutanoate: step 2/4. Its function is as follows. Catalyzes the isomerization between 2-isopropylmalate and 3-isopropylmalate, via the formation of 2-isopropylmaleate. This chain is 3-isopropylmalate dehydratase small subunit, found in Pseudomonas fluorescens (strain ATCC BAA-477 / NRRL B-23932 / Pf-5).